A 182-amino-acid chain; its full sequence is Mu-like prophage FluMu protein gp45 (182 aa).

Residues 159-182 (TDHQSSGISGKNHDHEERVGKPVP) form a disordered region. Basic and acidic residues predominate over residues 169–182 (KNHDHEERVGKPVP).

The protein to phage Mu protein gp45.

The sequence is that of Mu-like prophage FluMu protein gp45 from Haemophilus influenzae (strain ATCC 51907 / DSM 11121 / KW20 / Rd).